A 497-amino-acid chain; its full sequence is Glycerol kinase (497 aa).

Thr12 provides a ligand contact to ADP. Residues Thr12, Thr13, and Ser14 each contribute to the ATP site. Thr12 is a sn-glycerol 3-phosphate binding site. Arg16 lines the ADP pocket. 4 residues coordinate sn-glycerol 3-phosphate: Arg82, Glu83, Tyr134, and Asp243. Glycerol is bound by residues Arg82, Glu83, Tyr134, Asp243, and Gln244. Residues Thr265 and Gly308 each contribute to the ADP site. ATP-binding residues include Thr265, Gly308, Gln312, and Gly409. ADP is bound by residues Gly409 and Asn413.

This sequence belongs to the FGGY kinase family.

It catalyses the reaction glycerol + ATP = sn-glycerol 3-phosphate + ADP + H(+). Its pathway is polyol metabolism; glycerol degradation via glycerol kinase pathway; sn-glycerol 3-phosphate from glycerol: step 1/1. Inhibited by fructose 1,6-bisphosphate (FBP). Its function is as follows. Key enzyme in the regulation of glycerol uptake and metabolism. Catalyzes the phosphorylation of glycerol to yield sn-glycerol 3-phosphate. The sequence is that of Glycerol kinase from Oleidesulfovibrio alaskensis (strain ATCC BAA-1058 / DSM 17464 / G20) (Desulfovibrio alaskensis).